Consider the following 382-residue polypeptide: Alkanesulfonate monooxygenase (382 aa).

Belongs to the SsuD family.

The catalysed reaction is an alkanesulfonate + FMNH2 + O2 = an aldehyde + FMN + sulfite + H2O + 2 H(+). Its function is as follows. Catalyzes the desulfonation of aliphatic sulfonates. In Pseudomonas putida (strain ATCC 700007 / DSM 6899 / JCM 31910 / BCRC 17059 / LMG 24140 / F1), this protein is Alkanesulfonate monooxygenase.